Reading from the N-terminus, the 199-residue chain is uncharacterized protein (199 aa).

The next 4 membrane-spanning stretches (helical) occupy residues 35–55 (CELAFSILILFCAFAELIFYD), 57–77 (FVIFFLMIIASFVFVLLYLEF), 94–114 (LSAAFMSMVCWLSVLIPIFFG), and 131–151 (YYGCQVIFGSLLTTFAAASFA).

The protein resides in the membrane. This is an uncharacterized protein from Caenorhabditis elegans.